We begin with the raw amino-acid sequence, 814 residues long: Protein ADP-ribosyltransferase PARP3 (814 aa).

Basic and acidic residues-rich tracts occupy residues 1 to 19 (MKVH…EQKG) and 27 to 48 (EGKL…DDGR). Positions 1–52 (MKVHETRSHAHMSGDEQKGNLRKHKAEGKLPESEQSQKKAKPENDDGRSVNG) are disordered. The 149-residue stretch at 38 to 186 (KKAKPENDDG…KRELGSADKP (149 aa)) folds into the PADR1 zinc-binding domain. The segment at 105-150 (GALAKCPLCGGTLICDNEKRFVCGGEISEWCSCVFSTKDPPRKEEP) is zinc ribbon. The Zn(2+) site is built by Cys110, Cys113, Cys127, and Cys137. TPR repeat units lie at residues 182-215 (SADK…NGGK) and 277-310 (DLSV…YGKR). The BRCT domain maps to 187–274 (FVGMMISLMG…EAQPLEAYDV (88 aa)). The region spanning 322–422 (GGKIFEKDGL…KKIQKKPHKF (101 aa)) is the WGR domain. The region spanning 449 to 568 (HCKLDSFVAN…DINTASRLIG (120 aa)) is the PARP alpha-helical domain. Residues 577 to 808 (DPLSDRYKKL…VKYEEKGTEI (232 aa)) form the PARP catalytic domain.

The protein belongs to the ARTD/PARP family.

Its subcellular location is the nucleus. It carries out the reaction L-aspartyl-[protein] + NAD(+) = 4-O-(ADP-D-ribosyl)-L-aspartyl-[protein] + nicotinamide. The enzyme catalyses L-glutamyl-[protein] + NAD(+) = 5-O-(ADP-D-ribosyl)-L-glutamyl-[protein] + nicotinamide. Functionally, involved in the base excision repair (BER) pathway, by catalyzing the poly(ADP-ribosyl)ation of a limited number of acceptor proteins involved in chromatin architecture and in DNA metabolism. This modification follows DNA damages and appears as an obligatory step in a detection/signaling pathway leading to the reparation of DNA strand breaks. The protein is Protein ADP-ribosyltransferase PARP3 (PARP3) of Arabidopsis thaliana (Mouse-ear cress).